A 530-amino-acid polypeptide reads, in one-letter code: RNA-binding protein 39 (530 aa).

Positions Met-1–Thr-146 are disordered. At Ala-2 the chain carries N-acetylalanine. The span at Pro-14–Ser-32 shows a compositional bias: basic and acidic residues. 2 stretches are compositionally biased toward basic residues: residues Lys-33–Lys-56 and Lys-64–Tyr-95. Position 95 is a phosphotyrosine (Tyr-95). Phosphoserine is present on residues Ser-97 and Ser-100. Residue Lys-111 forms a Glycyl lysine isopeptide (Lys-Gly) (interchain with G-Cter in SUMO2) linkage. Ser-117 carries the post-translational modification Phosphoserine. Lys-119 is covalently cross-linked (Glycyl lysine isopeptide (Lys-Gly) (interchain with G-Cter in SUMO2)). Over residues Lys-119–Pro-130 the composition is skewed to basic residues. 2 positions are modified to phosphoserine: Ser-121 and Ser-136. Residues Phe-131 to Thr-146 are compositionally biased toward basic and acidic residues. Thr-146 is subject to Phosphothreonine. The 78-residue stretch at Arg-153–Ala-230 folds into the RRM 1 domain. Lys-244 participates in a covalent cross-link: Glycyl lysine isopeptide (Lys-Gly) (interchain with G-Cter in SUMO2). An RRM 2 domain is found at Met-250–Glu-328. An activating domain region spans residues Lys-291–Gly-355. The segment at Lys-291–Gln-406 is interaction with JUN. Phosphoserine is present on residues Ser-334, Ser-337, and Ser-341. The tract at residues Gly-355–Gln-406 is interaction with ESR1 and ESR2. The segment at Gln-406–Arg-530 is interaction with NCOA6. The 64-residue stretch at Glu-445–Leu-508 folds into the RRM 3 domain.

It belongs to the splicing factor SR family. Interacts with NCOA6 and JUN. Interacts with ESR1 and ESR2, in the presence of estradiol (E2). Interacts with RSRC1 (via Arg/Ser-rich domain). Interacts with SF3B1. Interacts with ZNF106 (via N-terminus). Aryl sulfonamide anticancer drugs, such as indisulam (E7070) or E7820, promote ubiquitination and subsequent degradation by the DCX(DCAF15) complex. RBM39 degradation results in splicing defects and death in cancer cell lines. Aryl sulfonamide anticancer drugs change the substrate specificity of DCAF15 by acting as a molecular glue that promotes binding between DCAF15 and weak affinity interactor RBM39. In terms of tissue distribution, widely expressed. Highly expressed in pancreas, skeletal muscle, lung and brain. Expressed at intermediate level in kidney, liver and heart.

The protein localises to the nucleus speckle. Functionally, RNA-binding protein that acts as a pre-mRNA splicing factor. Acts by promoting exon inclusion via regulation of exon cassette splicing. Also acts as a transcriptional coactivator for steroid nuclear receptors ESR1/ER-alpha and ESR2/ER-beta, and JUN/AP-1, independently of the pre-mRNA splicing factor activity. The sequence is that of RNA-binding protein 39 from Homo sapiens (Human).